The sequence spans 153 residues: Phosphoribosyl-AMP cyclohydrolase (153 aa).

D93 is a Mg(2+) binding site. C94 is a Zn(2+) binding site. Mg(2+) contacts are provided by D95 and D97. Zn(2+)-binding residues include C112 and C119.

It belongs to the PRA-CH family. In terms of assembly, homodimer. The cofactor is Mg(2+). Requires Zn(2+) as cofactor.

It localises to the cytoplasm. It catalyses the reaction 1-(5-phospho-beta-D-ribosyl)-5'-AMP + H2O = 1-(5-phospho-beta-D-ribosyl)-5-[(5-phospho-beta-D-ribosylamino)methylideneamino]imidazole-4-carboxamide. It participates in amino-acid biosynthesis; L-histidine biosynthesis; L-histidine from 5-phospho-alpha-D-ribose 1-diphosphate: step 3/9. Its function is as follows. Catalyzes the hydrolysis of the adenine ring of phosphoribosyl-AMP. The polypeptide is Phosphoribosyl-AMP cyclohydrolase (Mesorhizobium japonicum (strain LMG 29417 / CECT 9101 / MAFF 303099) (Mesorhizobium loti (strain MAFF 303099))).